A 430-amino-acid chain; its full sequence is Putrescine 2-hydroxylase (430 aa).

Positions 88–203 (LYVGHQKLVP…LRDCHGLLFE (116 aa)) constitute a Rieske domain. The [2Fe-2S] cluster site is built by C128, H130, C162, and H165.

It belongs to the bacterial ring-hydroxylating dioxygenase alpha subunit family. It depends on [2Fe-2S] cluster as a cofactor.

Its function is as follows. Rieske-type iron sulfur protein that can catalyze in vitro the 2-hydroxylation of putrescine, forming 2-hydroxyputrescine. May be involved in the biosynthesis of the cyclic hydroxamate siderophore alcaligin. The sequence is that of Putrescine 2-hydroxylase from Bordetella bronchiseptica (strain ATCC BAA-588 / NCTC 13252 / RB50) (Alcaligenes bronchisepticus).